A 289-amino-acid polypeptide reads, in one-letter code: Sphingomyelinase D (289 aa).

Residues 1-22 (MQSISVLICVLLALSILNFTVA) form the signal peptide. Histidine 34 is a catalytic residue. Mg(2+) is bound by residues glutamate 54, aspartate 56, and aspartate 103. The short motif at 282-289 (ATEDDAPW) is the SMD-tail element.

Belongs to the sphingomyelinase D/phospholipase D family. Mg(2+) serves as cofactor.

Its subcellular location is the secreted. It carries out the reaction a sphingomyelin + H2O = an N-acylsphing-4-enine 1-phosphate + choline + H(+). Its activity is regulated as follows. Sphingomyelinase activity is reduced by 33 percent following addition of EDTA. In terms of biological role, catalyzes the hydrolysis of sphingomyelin. Sphingomyelinases D are produced by some spider in their venoms, but also by arthropods such as ticks, or pathogenic bacteria and fungi. They might play a role in pathogenicity through different mechanisms, such as membrane destabilization and host cell penetration, but also pulmonary inflammation and cutaneous lesions. This Aspergillus flavus (strain ATCC 200026 / FGSC A1120 / IAM 13836 / NRRL 3357 / JCM 12722 / SRRC 167) protein is Sphingomyelinase D.